The sequence spans 386 residues: Succinate--CoA ligase [ADP-forming] subunit beta (386 aa).

One can recognise an ATP-grasp domain in the interval 9 to 244 (KQILKRFGIS…YDEEIPEEIE (236 aa)). Residues K46, 53–55 (GRG), E99, C102, and E107 each bind ATP. Mg(2+) contacts are provided by N199 and D213. Substrate contacts are provided by residues N264 and 320-322 (GIM).

It belongs to the succinate/malate CoA ligase beta subunit family. In terms of assembly, heterotetramer of two alpha and two beta subunits. Mg(2+) serves as cofactor.

The catalysed reaction is succinate + ATP + CoA = succinyl-CoA + ADP + phosphate. It carries out the reaction GTP + succinate + CoA = succinyl-CoA + GDP + phosphate. It functions in the pathway carbohydrate metabolism; tricarboxylic acid cycle; succinate from succinyl-CoA (ligase route): step 1/1. Functionally, succinyl-CoA synthetase functions in the citric acid cycle (TCA), coupling the hydrolysis of succinyl-CoA to the synthesis of either ATP or GTP and thus represents the only step of substrate-level phosphorylation in the TCA. The beta subunit provides nucleotide specificity of the enzyme and binds the substrate succinate, while the binding sites for coenzyme A and phosphate are found in the alpha subunit. In Ehrlichia ruminantium (strain Welgevonden), this protein is Succinate--CoA ligase [ADP-forming] subunit beta.